Consider the following 560-residue polypeptide: Interferon alpha/beta receptor 1 (560 aa).

The N-terminal stretch at 1–24 is a signal peptide; the sequence is MLGLLGATTLMLVAGAPWVLPAGG. The Extracellular segment spans residues 25 to 437; the sequence is ADLRSPENVV…EKTKPGSTSQ (413 aa). Fibronectin type-III domains are found at residues 29–125, 133–224, 231–329, and 333–433; these read SPEN…FQEA, HLEA…INTT, SPEN…TEMQ, and FPPV…TKPG. N-linked (GlcNAc...) asparagine glycosylation occurs at Asn-55. Cys-76 and Cys-84 are oxidised to a cystine. 3 N-linked (GlcNAc...) asparagine glycosylation sites follow: Asn-85, Asn-108, and Asn-172. Cys-199 and Cys-220 are disulfide-bonded. Residues Asn-222, Asn-249, and Asn-254 are each glycosylated (N-linked (GlcNAc...) asparagine). The cysteines at positions 283 and 291 are disulfide-linked. Residues Asn-313, Asn-377, and Asn-417 are each glycosylated (N-linked (GlcNAc...) asparagine). Cys-404 and Cys-427 are disulfide-bonded. A helical transmembrane segment spans residues 438-458; that stretch reads AWLIAGILSAILLFPAVFYGV. The Cytoplasmic portion of the chain corresponds to 459 to 560; it reads KVVSRCINYV…GEEILRQAAV (102 aa). Cys-464 is lipidated: S-palmitoyl cysteine. Phosphotyrosine; by TYK2 is present on residues Tyr-467 and Tyr-482. The segment at 492–501 is important for interaction with TYK2; that stretch reads LLSTSEEQTE. Residues Ser-496 and Ser-536 each carry the phosphoserine modification. Residues 520 to 560 form a disordered region; it reads QIDDNHSRCSSQTNRDSGVYSNEDENSGSKIGEEILRQAAV. Residues 527–539 show a composition bias toward polar residues; sequence RCSSQTNRDSGVY. Over residues 550–560 the composition is skewed to basic and acidic residues; it reads IGEEILRQAAV.

It belongs to the type II cytokine receptor family. As to quaternary structure, heterodimer with IFNAR2; forming the receptor for type I interferon. Interacts with TYK2. Interacts with STAT1 and STAT2; the interaction requires its phosphorylation at Tyr-482. Interacts (serine-phosphorylated form) with FBXW11, the substrate recognition component of a SCF (SKP1-CUL1-F-box protein) E3 ubiquitin-protein ligase complex. Interacts with SHMT2; this promotes interaction with ABRAXAS2 and the BRISC complex. Interacts with TRIM10; this interaction prevents association between IFNAR1 and TYK2. Post-translationally, ubiquitinated, leading to its internalization and degradation. Polyubiquitinated via 'Lys-48'-linked and 'Lys-63'-linked ubiquitin chains, leading to receptor internalization and lysosomal degradation. The 'Lys-63'-linked ubiquitin chains are cleaved off by the BRISC complex. In terms of processing, phosphorylated on tyrosine residues in response to interferon-binding: phosphorylation by TYK2 tyrosine kinase creates docking sites for STAT proteins. Phosphorylated on serine residues in response to interferon binding; this promotes interaction with FBXW11 and ubiquitination. Palmitoylation at Cys-464 is required for the activation of STAT1 and STAT2.

The protein resides in the cell membrane. The protein localises to the late endosome. Its subcellular location is the lysosome. In terms of biological role, together with IFNAR2, forms the heterodimeric receptor for type I interferons (including interferons alpha, beta, epsilon, omega and kappa). Type I interferon binding activates the JAK-STAT signaling cascade, resulting in transcriptional activation or repression of interferon-regulated genes that encode the effectors of the interferon response. Mechanistically, type I interferon-binding brings the IFNAR1 and IFNAR2 subunits into close proximity with one another, driving their associated Janus kinases (JAKs) (TYK2 bound to IFNAR1 and JAK1 bound to IFNAR2) to cross-phosphorylate one another. The activated kinases phosphorylate specific tyrosine residues on the intracellular domains of IFNAR1 and IFNAR2, forming docking sites for the STAT transcription factors. STAT proteins are then phosphorylated by the JAKs, promoting their translocation into the nucleus to regulate expression of interferon-regulated genes. Can also act independently of IFNAR2: form an active IFNB1 receptor by itself and activate a signaling cascade that does not involve activation of the JAK-STAT pathway. This is Interferon alpha/beta receptor 1 (IFNAR1) from Sus scrofa (Pig).